Reading from the N-terminus, the 366-residue chain is Peptide chain release factor 1 (366 aa).

An N5-methylglutamine modification is found at Gln-239.

It belongs to the prokaryotic/mitochondrial release factor family. In terms of processing, methylated by PrmC. Methylation increases the termination efficiency of RF1.

It is found in the cytoplasm. Peptide chain release factor 1 directs the termination of translation in response to the peptide chain termination codons UAG and UAA. The sequence is that of Peptide chain release factor 1 from Albidiferax ferrireducens (strain ATCC BAA-621 / DSM 15236 / T118) (Rhodoferax ferrireducens).